We begin with the raw amino-acid sequence, 476 residues long: Ribulose bisphosphate carboxylase large chain (476 aa).

A propeptide spanning residues 1 to 2 (MS) is cleaved from the precursor. Pro-3 carries the N-acetylproline modification. Position 14 is an N6,N6,N6-trimethyllysine (Lys-14). Asn-123 and Thr-173 together coordinate substrate. The active-site Proton acceptor is Lys-175. Position 177 (Lys-177) interacts with substrate. Residues Lys-201, Asp-203, and Glu-204 each contribute to the Mg(2+) site. Lys-201 carries the N6-carboxylysine modification. The Proton acceptor role is filled by His-294. Arg-295, His-327, and Ser-379 together coordinate substrate.

This sequence belongs to the RuBisCO large chain family. Type I subfamily. As to quaternary structure, heterohexadecamer of 8 large chains and 8 small chains; disulfide-linked. The disulfide link is formed within the large subunit homodimers. The cofactor is Mg(2+). Post-translationally, the disulfide bond which can form in the large chain dimeric partners within the hexadecamer appears to be associated with oxidative stress and protein turnover.

The protein localises to the plastid. Its subcellular location is the chloroplast. It catalyses the reaction 2 (2R)-3-phosphoglycerate + 2 H(+) = D-ribulose 1,5-bisphosphate + CO2 + H2O. The catalysed reaction is D-ribulose 1,5-bisphosphate + O2 = 2-phosphoglycolate + (2R)-3-phosphoglycerate + 2 H(+). Functionally, ruBisCO catalyzes two reactions: the carboxylation of D-ribulose 1,5-bisphosphate, the primary event in carbon dioxide fixation, as well as the oxidative fragmentation of the pentose substrate in the photorespiration process. Both reactions occur simultaneously and in competition at the same active site. The sequence is that of Ribulose bisphosphate carboxylase large chain from Arenaria drummondii (Drummond sandwort).